The primary structure comprises 196 residues: CRISPR-associated exonuclease Cas4 (196 aa).

[4Fe-4S] cluster is bound at residue C23. Residues H50, D90, and E103 each contribute to the Mn(2+) site. [4Fe-4S] cluster-binding residues include C184, C187, and C193.

This sequence belongs to the CRISPR-associated exonuclease Cas4 family. Requires Mg(2+) as cofactor. [4Fe-4S] cluster serves as cofactor.

The enzyme catalyses exonucleolytic cleavage in the 5'- to 3'-direction to yield nucleoside 3'-phosphates.. CRISPR (clustered regularly interspaced short palindromic repeat) is an adaptive immune system that provides protection against mobile genetic elements (viruses, transposable elements and conjugative plasmids). CRISPR clusters contain sequences complementary to antecedent mobile elements and target invading nucleic acids. CRISPR clusters are transcribed and processed into CRISPR RNA (crRNA). This may be a 5' to 3' ssDNA exonuclease. This chain is CRISPR-associated exonuclease Cas4, found in Francisella tularensis subsp. novicida (strain U112).